The chain runs to 317 residues: DNA-directed RNA polymerase subunit alpha (317 aa).

Residues 1–234 (MKQFVRPEFI…AHLEFFIDLN (234 aa)) are alpha N-terminal domain (alpha-NTD). Positions 250–317 (DKELDRTVEE…ASLGLAFRQS (68 aa)) are alpha C-terminal domain (alpha-CTD).

The protein belongs to the RNA polymerase alpha chain family. Homodimer. The RNAP catalytic core consists of 2 alpha, 1 beta, 1 beta' and 1 omega subunit. When a sigma factor is associated with the core the holoenzyme is formed, which can initiate transcription.

The catalysed reaction is RNA(n) + a ribonucleoside 5'-triphosphate = RNA(n+1) + diphosphate. Its function is as follows. DNA-dependent RNA polymerase catalyzes the transcription of DNA into RNA using the four ribonucleoside triphosphates as substrates. This chain is DNA-directed RNA polymerase subunit alpha, found in Mycoplasma mycoides subsp. mycoides SC (strain CCUG 32753 / NCTC 10114 / PG1).